An 81-amino-acid polypeptide reads, in one-letter code: Large ribosomal subunit protein bL31 (81 aa).

Belongs to the bacterial ribosomal protein bL31 family. Type A subfamily. In terms of assembly, part of the 50S ribosomal subunit.

Binds the 23S rRNA. In Synechocystis sp. (strain ATCC 27184 / PCC 6803 / Kazusa), this protein is Large ribosomal subunit protein bL31.